Consider the following 259-residue polypeptide: UPF0246 protein Rfer_2372 (259 aa).

The protein belongs to the UPF0246 family.

This is UPF0246 protein Rfer_2372 from Albidiferax ferrireducens (strain ATCC BAA-621 / DSM 15236 / T118) (Rhodoferax ferrireducens).